A 209-amino-acid polypeptide reads, in one-letter code: Guanylate kinase (209 aa).

Positions 10–189 constitute a Guanylate kinase-like domain; it reads GLLLVLSAPS…AFSDLRSVVV (180 aa). 17–24 provides a ligand contact to ATP; the sequence is APSGAGKT.

Belongs to the guanylate kinase family.

The protein resides in the cytoplasm. It catalyses the reaction GMP + ATP = GDP + ADP. In terms of biological role, essential for recycling GMP and indirectly, cGMP. The chain is Guanylate kinase from Myxococcus xanthus (strain DK1622).